The primary structure comprises 198 residues: DnaJ homolog subfamily C member 12 (198 aa).

Met-1 is modified (N-acetylmethionine). The region spanning 14–79 (DYYTLLGCDE…ESRARYDHWR (66 aa)) is the J domain. The span at 114–156 (EESDKTHTTKMENEECNEQRERKKEELASTAEKTEQKEPKPLE) shows a compositional bias: basic and acidic residues. Positions 114-169 (EESDKTHTTKMENEECNEQRERKKEELASTAEKTEQKEPKPLEKSVSPQNSDSSGF) are disordered. 3 positions are modified to phosphoserine: Ser-160, Ser-166, and Ser-182.

Interacts with HSPA8. Interacts with TPH1. Interacts with TPH2. As to expression, expressed at high levels in brain, heart, and testis, and at reduced levels in kidney and stomach.

It is found in the cytoplasm. In terms of biological role, probable co-chaperone that participates in the proper folding of biopterin-dependent aromatic amino acid hydroxylases, which include phenylalanine-4-hydroxylase (PAH), tyrosine 3-monooxygenase (TH) and peripheral and neuronal tryptophan hydroxylases (TPH1 and TPH2). This chain is DnaJ homolog subfamily C member 12 (DNAJC12), found in Homo sapiens (Human).